The chain runs to 1627 residues: Type III effector DspE (1627 aa).

Polar residues-rich tracts occupy residues 22-44 and 59-74; these read AKTSLSQGNSTSASQKGAQSLIQ and GNGSSVRSQDSRSTTL. Disordered regions lie at residues 22-102 and 436-464; these read AKTS…GPIQ and QTQALATDRQGQKHVAPLGQNGLSPTPGW. Short sequence motifs (wxxxE) lie at residues 464–468, 514–520, and 660–667; these read WNLSD, WEASSVE, and WQNAANHD.

The protein belongs to the AvrE family.

It localises to the secreted. The protein resides in the host cell. Functionally, major virulence factor that may function as a water- and solute-permeable channel dedicated to creating osmotic/water potential perturbation and a water- and nutrient-rich apoplast in which bacteria multiply within the infected plant tissues. Its function is as follows. Required for plant cell death in N.benthamiana leaves and leaf cell death in S.tuberosum. Essential for pathogenicity. Does not suppress callose formation. The sequence is that of Type III effector DspE from Pectobacterium carotovorum (Erwinia carotovora).